We begin with the raw amino-acid sequence, 877 residues long: DNA (cytosine-5)-methyltransferase 3A (877 aa).

3 disordered regions span residues 1-154 (MVES…MQRH), 194-250 (EETP…PEYE), and 412-431 (AYAP…EKPK). Composition is skewed to basic and acidic residues over residues 107 to 133 (KLLE…EGSR) and 195 to 206 (ETPRAEPQKEEE). The span at 210 to 225 (PASQQPTDPASPNVAT) shows a compositional bias: polar residues. The region spanning 226–284 (TPEPVVADAVDKNTSKSADDEPEYEDGRGLGIGELVWGKLRGFSWWPGRIVSWWMTGRS) is the PWWP domain. Residues 234–244 (AVDKNTSKSAD) show a composition bias toward basic and acidic residues. Residues 447 to 579 (EVRQKCRNIE…LQMFFANNHD (133 aa)) form the ADD domain. Residues 458–488 (ICISCGSLNVTLEHPLFIGGMCQNCKNCFLE) form a GATA-type; atypical zinc finger. The PHD-type; atypical zinc-finger motif lies at 499-555 (QSYCTICCGGREVLMCGNNNCCRCFCVECVDLLVGPGAAQAAIKEDPWNCYMCGHKG). Positions 599 to 877 (IRVLSLFDGI…APLKEYFACV (279 aa)) constitute an SAM-dependent MTase C5-type domain. Residues 606–610 (DGIAT), Glu-629, and 651–653 (DVR) contribute to the S-adenosyl-L-methionine site. Cys-675 is a catalytic residue. Residue 856-858 (RSW) participates in S-adenosyl-L-methionine binding.

This sequence belongs to the class I-like SAM-binding methyltransferase superfamily. C5-methyltransferase family.

The protein resides in the nucleus. The protein localises to the chromosome. It is found in the cytoplasm. The enzyme catalyses a 2'-deoxycytidine in DNA + S-adenosyl-L-methionine = a 5-methyl-2'-deoxycytidine in DNA + S-adenosyl-L-homocysteine + H(+). It carries out the reaction L-cysteinyl-[protein] + S-adenosyl-L-methionine = S-methyl-L-cysteinyl-[protein] + S-adenosyl-L-homocysteine + H(+). Its function is as follows. Required for genome-wide de novo methylation and is essential for development. DNA methylation is coordinated with methylation of histones. It modifies DNA in a non-processive manner and also methylates non-CpG sites. Acts as a transcriptional corepressor for ZNF238. Can actively repress transcription through the recruitment of HDAC activity. Also has weak auto-methylation activity on some Cys residue in absence of DNA. The chain is DNA (cytosine-5)-methyltransferase 3A (DNMT3A) from Gallus gallus (Chicken).